A 537-amino-acid polypeptide reads, in one-letter code: Glucans biosynthesis protein D (537 aa).

Positions 1–30 (MLMYRRDFLKSVTAAWVAFGLPNPLGGAFA) form a signal peptide, tat-type signal.

Belongs to the OpgD/OpgG family. Predicted to be exported by the Tat system. The position of the signal peptide cleavage has not been experimentally proven.

It localises to the periplasm. Its pathway is glycan metabolism; osmoregulated periplasmic glucan (OPG) biosynthesis. In terms of biological role, probably involved in the control of the structural glucose backbone of osmoregulated periplasmic glucans (OPGs). The chain is Glucans biosynthesis protein D from Xylella fastidiosa (strain M12).